We begin with the raw amino-acid sequence, 264 residues long: Hydroxyethylthiazole kinase (264 aa).

Residue Met43 coordinates substrate. Residues Lys119 and Ser165 each coordinate ATP. Gly192 lines the substrate pocket.

The protein belongs to the Thz kinase family. The cofactor is Mg(2+).

The catalysed reaction is 5-(2-hydroxyethyl)-4-methylthiazole + ATP = 4-methyl-5-(2-phosphooxyethyl)-thiazole + ADP + H(+). It functions in the pathway cofactor biosynthesis; thiamine diphosphate biosynthesis; 4-methyl-5-(2-phosphoethyl)-thiazole from 5-(2-hydroxyethyl)-4-methylthiazole: step 1/1. Functionally, catalyzes the phosphorylation of the hydroxyl group of 4-methyl-5-beta-hydroxyethylthiazole (THZ). The sequence is that of Hydroxyethylthiazole kinase from Methanocorpusculum labreanum (strain ATCC 43576 / DSM 4855 / Z).